The following is a 369-amino-acid chain: Biglycan (369 aa).

The signal sequence occupies residues 1-16 (MWPLWLVASLLALSQA). A propeptide spanning residues 17-37 (LPFEQKGFWDFTLDDGLPMLN) is cleaved from the precursor. 2 O-linked (Xyl...) (glycosaminoglycan) serine glycosylation sites follow: serine 42 and serine 48. 2 disulfide bridges follow: cysteine 64-cysteine 70 and cysteine 68-cysteine 77. LRR repeat units lie at residues 83–103 (KAVP…NNDI), 104–127 (SELR…NNKI), 128–151 (SKIH…KNHL), 152–172 (VEIP…DNRI), 173–196 (RKVP…GNPL), 197–221 (ENSG…EAKL), 222–242 (TGIP…HNKI), 243–266 (QAIE…HNQI), 267–290 (RMIE…NNKL), 291–313 (SRVP…TNNI), 314–343 (TKVG…NNPV), and 344–369 (PYWE…NYKK). Residues asparagine 271 and asparagine 312 are each glycosylated (N-linked (GlcNAc...) asparagine). The cysteines at positions 322 and 355 are disulfide-linked.

This sequence belongs to the small leucine-rich proteoglycan (SLRP) family. SLRP class I subfamily. Homodimer. Forms a ternary complex with MFAP2 and ELN. Post-translationally, the two attached glycosaminoglycan chains can be either chondroitin sulfate or dermatan sulfate.

The protein localises to the secreted. It is found in the extracellular space. Its subcellular location is the extracellular matrix. Its function is as follows. May be involved in collagen fiber assembly. This is Biglycan (BGN) from Canis lupus familiaris (Dog).